Consider the following 30-residue polypeptide: Cytochrome c3, 50 kDa (30 aa).

Monomer. Binds 4 heme groups per subunit.

It is found in the periplasm. Functionally, participates in sulfate respiration coupled with phosphorylation by transferring electrons from the enzyme dehydrogenase to ferredoxin. The chain is Cytochrome c3, 50 kDa from Desulfuromonas acetoxidans (Chloropseudomonas ethylica).